A 120-amino-acid chain; its full sequence is Large ribosomal subunit protein uL18 (120 aa).

The protein belongs to the universal ribosomal protein uL18 family. In terms of assembly, part of the 50S ribosomal subunit; part of the 5S rRNA/L5/L18/L25 subcomplex. Contacts the 5S and 23S rRNAs.

This is one of the proteins that bind and probably mediate the attachment of the 5S RNA into the large ribosomal subunit, where it forms part of the central protuberance. The chain is Large ribosomal subunit protein uL18 from Geobacillus sp. (strain WCH70).